Reading from the N-terminus, the 471-residue chain is 3-isopropylmalate dehydratase large subunit (471 aa).

Cysteine 347, cysteine 407, and cysteine 410 together coordinate [4Fe-4S] cluster.

It belongs to the aconitase/IPM isomerase family. LeuC type 1 subfamily. In terms of assembly, heterodimer of LeuC and LeuD. It depends on [4Fe-4S] cluster as a cofactor.

It carries out the reaction (2R,3S)-3-isopropylmalate = (2S)-2-isopropylmalate. It functions in the pathway amino-acid biosynthesis; L-leucine biosynthesis; L-leucine from 3-methyl-2-oxobutanoate: step 2/4. Catalyzes the isomerization between 2-isopropylmalate and 3-isopropylmalate, via the formation of 2-isopropylmaleate. This Buchnera aphidicola subsp. Baizongia pistaciae (strain Bp) protein is 3-isopropylmalate dehydratase large subunit.